The following is a 169-amino-acid chain: Shikimate kinase (169 aa).

12-17 contacts ATP; sequence GAGKST. Residue Ser16 participates in Mg(2+) binding. Substrate contacts are provided by Asp34, Arg58, and Gly80. ATP is bound at residue Arg117. Position 136 (Arg136) interacts with substrate.

Belongs to the shikimate kinase family. Monomer. Mg(2+) serves as cofactor.

Its subcellular location is the cytoplasm. The enzyme catalyses shikimate + ATP = 3-phosphoshikimate + ADP + H(+). It participates in metabolic intermediate biosynthesis; chorismate biosynthesis; chorismate from D-erythrose 4-phosphate and phosphoenolpyruvate: step 5/7. Its function is as follows. Catalyzes the specific phosphorylation of the 3-hydroxyl group of shikimic acid using ATP as a cosubstrate. The polypeptide is Shikimate kinase (Rhodococcus erythropolis (strain PR4 / NBRC 100887)).